The sequence spans 668 residues: Bestrophin-3 (668 aa).

At 1–31 (MTVTYSSKVANATFFGFHRLLLKWRGSIYKL) the chain is on the cytoplasmic side. A Ca(2+)-binding site is contributed by A10. The helical transmembrane segment at 32–51 (LYREFIVFAVLYTAISLVYR) threads the bilayer. Topologically, residues 52–60 (LLLTGVQKR) are extracellular. A helical transmembrane segment spans residues 61–82 (YFEKLSIYCDRYAEQIPVTFVL). At 83–237 (GFYVTLVVNR…DWVGIPLVYT (155 aa)) the chain is on the cytoplasmic side. Residues 238–255 (QVVTLAVYTFFFACLIGR) traverse the membrane as a helical segment. Residues 256–274 (QFLDPTKGYAGHDLDLYIP) are Extracellular-facing. The chain crosses the membrane as a helical span at residues 275 to 288 (IFTLLQFFFYAGWL). Over 289 to 668 (KVAEQLINPF…LNKETEESPK (380 aa)) the chain is Cytoplasmic. The Ca(2+) site is built by Q293, N296, D301, and D304. Disordered stretches follow at residues 400-454 (SAHE…KKSC), 473-493 (RETS…VRTS), and 532-570 (TGVQ…VSAS). Basic and acidic residues predominate over residues 425–436 (PRDDLSPARDLL). Low complexity predominate over residues 475–489 (TSQTSTLQSLTPQSS). Residues 532–545 (TGVQPSKTEQQQGP) show a composition bias toward polar residues.

This sequence belongs to the anion channel-forming bestrophin (TC 1.A.46) family. Calcium-sensitive chloride channel subfamily. As to expression, present in skeletal muscle and weakly in brain, spinal cord, bone marrow and retina.

It localises to the cell membrane. It carries out the reaction chloride(in) = chloride(out). Ligand-gated anion channel that allows the movement of chloride monoatomic anions across cell membranes when activated by calcium (Ca2+). The chain is Bestrophin-3 from Homo sapiens (Human).